Reading from the N-terminus, the 325-residue chain is MASVRKAFPRRLVGLTSLRAVSTSSMGTLPKQVKIVEVGPRDGLQNEKSIVPTPVKIRLIDMLSEAGLPVIEATSFVSPKWVPQMADHSDVLKGIQKFPGINYPVLTPNMKGFEEAVAAGAKEVSVFGAVSELFTRKNANCSIEESFQRFAGVMQAAQAASISVRGYVSCALGCPYEGKVSPAKVAEVAKKLYSMGCYEISLGDTIGVGTPGLMKDMLTAVMHEVPVTALAVHCHDTYGQALANTLVALQMGVSVVDSSVAGLGGCPYAKGASGNLATEDLVYMLNGLGIHTGVNLQKLLEAGDFICQALNRKTSSKVAQATCKL.

The transit peptide at 1–27 (MASVRKAFPRRLVGLTSLRAVSTSSMG) directs the protein to the mitochondrion. In terms of domain architecture, Pyruvate carboxyltransferase spans 33–300 (VKIVEVGPRD…HTGVNLQKLL (268 aa)). R41 contacts substrate. D42 is a binding site for a divalent metal cation. At K48 the chain carries N6-acetyllysine; alternate. Position 48 is an N6-succinyllysine; alternate (K48). An N6-acetyllysine modification is found at K111. N6-acetyllysine; alternate is present on residues K137 and K179. N6-succinyllysine; alternate is present on residues K137 and K179. A divalent metal cation contacts are provided by H233 and H235. The active site involves C266. An a divalent metal cation-binding site is contributed by N275. Residues 323-325 (CKL) carry the Microbody targeting signal motif. Position 324 is an N6-acetyllysine (K324).

Belongs to the HMG-CoA lyase family. In terms of assembly, homodimer; disulfide-linked. Can also form homotetramers.

It is found in the mitochondrion matrix. The protein localises to the peroxisome. The enzyme catalyses (3S)-3-hydroxy-3-methylglutaryl-CoA = acetoacetate + acetyl-CoA. It functions in the pathway metabolic intermediate metabolism; (S)-3-hydroxy-3-methylglutaryl-CoA degradation; acetoacetate from (S)-3-hydroxy-3-methylglutaryl-CoA: step 1/1. Mitochondrial 3-hydroxy-3-methylglutaryl-CoA lyase that catalyzes a cation-dependent cleavage of (S)-3-hydroxy-3-methylglutaryl-CoA into acetyl-CoA and acetoacetate, a key step in ketogenesis. Terminal step in leucine catabolism. Ketone bodies (beta-hydroxybutyrate, acetoacetate and acetone) are essential as an alternative source of energy to glucose, as lipid precursors and as regulators of metabolism. In Mus musculus (Mouse), this protein is Hydroxymethylglutaryl-CoA lyase, mitochondrial (Hmgcl).